A 163-amino-acid chain; its full sequence is MSHLNIATLDASQHPYLPASSQTLFAAKAKKKLSFEEISQEIGRNEVATAAIFYGQAKASPEDITNLSKALDIPYELLEEQLSGFPDRGRSVEMPPREPLIYRLFEIVQNYGYAYKAVLNEKFGDGIMSAISFSTKVEKETDADGNNWAVITLRGKWLPFSRY.

Catalysis depends on residues Arg-103, Glu-106, and Ser-129.

This sequence belongs to the cyanase family.

It catalyses the reaction cyanate + hydrogencarbonate + 3 H(+) = NH4(+) + 2 CO2. Functionally, catalyzes the reaction of cyanate with bicarbonate to produce ammonia and carbon dioxide. This chain is Cyanate hydratase, found in Talaromyces marneffei (strain ATCC 18224 / CBS 334.59 / QM 7333) (Penicillium marneffei).